We begin with the raw amino-acid sequence, 239 residues long: Geranylgeranylglyceryl phosphate synthase (239 aa).

Aspartate 19 and serine 48 together coordinate Mg(2+). Sn-glycerol 1-phosphate is bound by residues 167-173 (YLEAGSG), 197-198 (GG), and 219-220 (GT).

Belongs to the GGGP/HepGP synthase family. Group II subfamily. The cofactor is Mg(2+).

Its subcellular location is the cytoplasm. The catalysed reaction is sn-glycerol 1-phosphate + (2E,6E,10E)-geranylgeranyl diphosphate = sn-3-O-(geranylgeranyl)glycerol 1-phosphate + diphosphate. Its pathway is membrane lipid metabolism; glycerophospholipid metabolism. Functionally, prenyltransferase that catalyzes the transfer of the geranylgeranyl moiety of geranylgeranyl diphosphate (GGPP) to the C3 hydroxyl of sn-glycerol-1-phosphate (G1P). This reaction is the first ether-bond-formation step in the biosynthesis of archaeal membrane lipids. This is Geranylgeranylglyceryl phosphate synthase from Methanopyrus kandleri (strain AV19 / DSM 6324 / JCM 9639 / NBRC 100938).